Here is a 465-residue protein sequence, read N- to C-terminus: Cysteine--tRNA ligase (465 aa).

Cysteine 28 is a Zn(2+) binding site. Positions 30 to 40 match the 'HIGH' region motif; the sequence is MTVYDYCHLGH. Residues cysteine 209, histidine 234, and glutamate 238 each contribute to the Zn(2+) site. Positions 266 to 270 match the 'KMSKS' region motif; sequence KMSKS. Residue lysine 269 coordinates ATP.

The protein belongs to the class-I aminoacyl-tRNA synthetase family. In terms of assembly, monomer. Zn(2+) serves as cofactor.

It localises to the cytoplasm. It catalyses the reaction tRNA(Cys) + L-cysteine + ATP = L-cysteinyl-tRNA(Cys) + AMP + diphosphate. The chain is Cysteine--tRNA ligase from Methylococcus capsulatus (strain ATCC 33009 / NCIMB 11132 / Bath).